The sequence spans 1245 residues: ABC transporter B family member 13 (1245 aa).

Over residues 1-14 (MDNTERSSNGNIQA) the composition is skewed to polar residues. The disordered stretch occupies residues 1 to 20 (MDNTERSSNGNIQAETEAKE). The ABC transmembrane type-1 1 domain occupies 47-336 (MLLGGLGACI…AAPSLSAIAK (290 aa)). The helical transmembrane segment at 48-68 (LLGGLGACIHGATLPLFFVFF) threads the bilayer. An N-linked (GlcNAc...) asparagine glycan is attached at Asn77. The next 5 membrane-spanning stretches (helical) occupy residues 94–114 (LYLV…VSCW), 171–191 (HVLR…LSVW), 195–215 (LLTL…AIVM), 276–296 (LGVG…LWYA), and 314–334 (ILNV…LSAI). N-linked (GlcNAc...) asparagine glycans are attached at residues Asn351 and Asn391. Residues 372-607 (IEFQKVSFAY…GGDYATLVNC (236 aa)) enclose the ABC transporter 1 domain. An ATP-binding site is contributed by 406-413 (GPSGSGKS). Polar residues predominate over residues 610-629 (TEPQENSRSIMSETCKSQAG). Positions 610–660 (TEPQENSRSIMSETCKSQAGSSSSRRVSSSRRTSSFRVDQEKTKNDDSKKD) are disordered. Positions 630 to 646 (SSSSRRVSSSRRTSSFR) are enriched in low complexity. The segment covering 647-660 (VDQEKTKNDDSKKD) has biased composition (basic and acidic residues). The ABC transmembrane type-1 2 domain maps to 681–969 (ALLGSIGAVL…TLALTPDIVK (289 aa)). A run of 2 helical transmembrane segments spans residues 686-706 (IGAV…AYVL) and 725-745 (AIIF…QHYF). Asn778 carries an N-linked (GlcNAc...) asparagine glycan. The next 4 membrane-spanning stretches (helical) occupy residues 805 to 822 (IVQN…AFFY), 828 to 848 (AVVT…QLFL), 913 to 933 (LSQF…SVLI), and 947 to 967 (FMVL…TPDI). The 237-residue stretch at 1004–1240 (IEFRNVSFVY…PNGFYKQLTS (237 aa)) folds into the ABC transporter 2 domain. A glycan (N-linked (GlcNAc...) asparagine) is linked at Asn1008. An ATP-binding site is contributed by 1039-1046 (GPSGSGKS). Residue Asn1106 is glycosylated (N-linked (GlcNAc...) asparagine).

The protein belongs to the ABC transporter superfamily. ABCB family. Multidrug resistance exporter (TC 3.A.1.201) subfamily.

It is found in the membrane. This is ABC transporter B family member 13 (ABCB13) from Arabidopsis thaliana (Mouse-ear cress).